Consider the following 370-residue polypeptide: DNA replication and repair protein RecF (370 aa).

Residue 30 to 37 (GENAQGKT) coordinates ATP.

It belongs to the RecF family.

The protein resides in the cytoplasm. Functionally, the RecF protein is involved in DNA metabolism; it is required for DNA replication and normal SOS inducibility. RecF binds preferentially to single-stranded, linear DNA. It also seems to bind ATP. The polypeptide is DNA replication and repair protein RecF (Staphylococcus aureus (strain bovine RF122 / ET3-1)).